We begin with the raw amino-acid sequence, 157 residues long: UPF0127 protein TK1120 (157 aa).

The protein belongs to the UPF0127 family.

The sequence is that of UPF0127 protein TK1120 from Thermococcus kodakarensis (strain ATCC BAA-918 / JCM 12380 / KOD1) (Pyrococcus kodakaraensis (strain KOD1)).